Reading from the N-terminus, the 372-residue chain is MTFSVQETLFSLLRLNGISGHENSIANVMQHAFEQQAKDVWRDRLGNVVARYGSDKPDALRLMIFAHMDEVGFMVRKIEPSGFLRFERVGGPAQITMPGSIVTLAGRSGDIMGCIGIKAYHFAKGDERTQPPALDKLWIDIGAKDKADAERMGIQVGTPVTLYNPPHCLGNDLVCSKALDDRLGCTALLGVAEALASTPLDIAVFLVASVQEEFNIRGIIPVLRRVRPDLAIGIDITPSCDTPDLQDYSDVRVNHGVGITCLNYHGRGTLAGLITPPRLLRMLETTAHENNIPVQREVAPGVITETGYIQVELDGIPCASLSIPCRYTHSPAEVASLRDLADCIRLLTALANMSPEQFPIEPETGATQEARP.

His67 and Asp180 together coordinate a divalent metal cation. The active-site Proton acceptor is Glu212. A divalent metal cation-binding residues include Glu213, Asp235, and His329.

It belongs to the peptidase M42 family. A divalent metal cation serves as cofactor.

This chain is Putative aminopeptidase SgcX (sgcX), found in Salmonella typhimurium (strain LT2 / SGSC1412 / ATCC 700720).